We begin with the raw amino-acid sequence, 298 residues long: Probable 2-(5''-triphosphoribosyl)-3'-dephosphocoenzyme-A synthase (298 aa).

The protein belongs to the CitG/MdcB family.

It catalyses the reaction 3'-dephospho-CoA + ATP = 2'-(5''-triphospho-alpha-D-ribosyl)-3'-dephospho-CoA + adenine. The protein is Probable 2-(5''-triphosphoribosyl)-3'-dephosphocoenzyme-A synthase of Salmonella arizonae (strain ATCC BAA-731 / CDC346-86 / RSK2980).